The primary structure comprises 356 residues: Arginine kinase (356 aa).

At A2 the chain carries N-acetylalanine. The 83-residue stretch at K9–K91 folds into the Phosphagen kinase N-terminal domain. G64–Y68 serves as a coordination point for L-arginine. Residues F119–M356 enclose the Phosphagen kinase C-terminal domain. ATP-binding positions include S122 to R126 and H185. E225 contacts L-arginine. R229 provides a ligand contact to ATP. L-arginine is bound at residue C271. Residues R280–H284 and R309–E314 each bind ATP. L-arginine is bound at residue E314.

This sequence belongs to the ATP:guanido phosphotransferase family.

It catalyses the reaction L-arginine + ATP = N(omega)-phospho-L-arginine + ADP + H(+). The protein is Arginine kinase of Homarus gammarus (European lobster).